The primary structure comprises 367 residues: tRNA/tmRNA (uracil-C(5))-methyltransferase (367 aa).

S-adenosyl-L-methionine is bound by residues Gln-189, Tyr-217, Asn-222, Glu-238, and Asp-298. The Nucleophile role is filled by Cys-323. Glu-357 functions as the Proton acceptor in the catalytic mechanism.

It belongs to the class I-like SAM-binding methyltransferase superfamily. RNA M5U methyltransferase family. TrmA subfamily.

It catalyses the reaction uridine(54) in tRNA + S-adenosyl-L-methionine = 5-methyluridine(54) in tRNA + S-adenosyl-L-homocysteine + H(+). It carries out the reaction uridine(341) in tmRNA + S-adenosyl-L-methionine = 5-methyluridine(341) in tmRNA + S-adenosyl-L-homocysteine + H(+). Its function is as follows. Dual-specificity methyltransferase that catalyzes the formation of 5-methyluridine at position 54 (m5U54) in all tRNAs, and that of position 341 (m5U341) in tmRNA (transfer-mRNA). The chain is tRNA/tmRNA (uracil-C(5))-methyltransferase from Pseudoalteromonas translucida (strain TAC 125).